The primary structure comprises 128 residues: MDLIQTLEQEEIARLAKNIPDFAPGDTVIVNVNVVEGTRKRAQAYEGVVISRRNRGLNSNFIVRKISSGEGVERTFQLYSPLIASIEVKRRGDVRRAKLYYLRERSGKSARIKEKLPQRRVVSKAAAE.

This sequence belongs to the bacterial ribosomal protein bL19 family.

Functionally, this protein is located at the 30S-50S ribosomal subunit interface and may play a role in the structure and function of the aminoacyl-tRNA binding site. In Herminiimonas arsenicoxydans, this protein is Large ribosomal subunit protein bL19.